A 367-amino-acid chain; its full sequence is DNA replication and repair protein RecF (367 aa).

Residue G30–T37 participates in ATP binding.

The protein belongs to the RecF family.

The protein resides in the cytoplasm. In terms of biological role, the RecF protein is involved in DNA metabolism; it is required for DNA replication and normal SOS inducibility. RecF binds preferentially to single-stranded, linear DNA. It also seems to bind ATP. This chain is DNA replication and repair protein RecF, found in Pseudomonas syringae pv. syringae (strain B728a).